The primary structure comprises 155 residues: MSPPTQSLQVKLLDPRFGDLWPLPAYATESSAGMDLRAALEAPMTLQPGDAALIPSGIAIHLADPQLCAVILPRSGLGHRHGIVLGNGTGLIDADYQGPLLISTWNRGREAFTIEPGDRIAQLVILPIVRMGLQVVDTFVDSARGAGGFGHTGVR.

Substrate contacts are provided by residues 74–76 (RSG), N87, and 91–93 (LID).

This sequence belongs to the dUTPase family. Mg(2+) serves as cofactor.

The enzyme catalyses dUTP + H2O = dUMP + diphosphate + H(+). The protein operates within pyrimidine metabolism; dUMP biosynthesis; dUMP from dCTP (dUTP route): step 2/2. In terms of biological role, this enzyme is involved in nucleotide metabolism: it produces dUMP, the immediate precursor of thymidine nucleotides and it decreases the intracellular concentration of dUTP so that uracil cannot be incorporated into DNA. This Xanthomonas axonopodis pv. citri (strain 306) protein is Deoxyuridine 5'-triphosphate nucleotidohydrolase.